A 55-amino-acid chain; its full sequence is Serine protease inhibitor Kazal-type 1 (55 aa).

The 54-residue stretch at 2 to 55 (QGRDANCNYEFPGCPRNLEPVCGTDGNTYNNECLLCMENKKRDVPIRIQKDGPC) folds into the Kazal-like domain. 3 cysteine pairs are disulfide-bonded: cysteine 8/cysteine 37, cysteine 15/cysteine 34, and cysteine 23/cysteine 55.

The protein resides in the secreted. In terms of biological role, serine protease inhibitor which exhibits anti-trypsin activity. In the pancreas, protects against trypsin-catalyzed premature activation of zymogens. Its function is as follows. In the male reproductive tract, binds to sperm heads where it modulates sperm capacitance by inhibiting calcium uptake and nitrogen oxide (NO) production. The sequence is that of Serine protease inhibitor Kazal-type 1 (SPINK1) from Monodelphis domestica (Gray short-tailed opossum).